The sequence spans 126 residues: C-type natriuretic peptide (126 aa).

The signal sequence occupies residues 1–23 (MHLSQLLACALLLALLSLRPSEA). The segment at 20–71 (PSEAKPGAPPKVPRTPSGEEVAEPQAAGGGQKKGDKTPGGGGANLKDDRSRL) is disordered. A propeptide spanning residues 24-73 (KPGAPPKVPRTPSGEEVAEPQAAGGGQKKGDKTPGGGGANLKDDRSRLLR) is cleaved from the precursor. The span at 46 to 62 (AGGGQKKGDKTPGGGGA) shows a compositional bias: gly residues. The cysteines at positions 110 and 126 are disulfide-linked.

The protein belongs to the natriuretic peptide family. Post-translationally, degraded by IDE (in vitro).

Its subcellular location is the secreted. In terms of biological role, hormone which plays a role in endochondral ossification through regulation of cartilaginous growth plate chondrocytes proliferation and differentiation. May also be vasoactive and natriuretic. Acts by specifically binding and stimulating NPR2 to produce cGMP. Binds the clearance receptor NPR3. This is C-type natriuretic peptide (NPPC) from Bos taurus (Bovine).